Here is a 957-residue protein sequence, read N- to C-terminus: Glycine dehydrogenase (decarboxylating) 2 (957 aa).

Position 707 is an N6-(pyridoxal phosphate)lysine (Lys707).

This sequence belongs to the GcvP family. In terms of assembly, the glycine cleavage system is composed of four proteins: P, T, L and H. It depends on pyridoxal 5'-phosphate as a cofactor.

The enzyme catalyses N(6)-[(R)-lipoyl]-L-lysyl-[glycine-cleavage complex H protein] + glycine + H(+) = N(6)-[(R)-S(8)-aminomethyldihydrolipoyl]-L-lysyl-[glycine-cleavage complex H protein] + CO2. The glycine cleavage system catalyzes the degradation of glycine. The P protein binds the alpha-amino group of glycine through its pyridoxal phosphate cofactor; CO(2) is released and the remaining methylamine moiety is then transferred to the lipoamide cofactor of the H protein. The chain is Glycine dehydrogenase (decarboxylating) 2 from Pseudomonas fluorescens (strain ATCC BAA-477 / NRRL B-23932 / Pf-5).